Consider the following 308-residue polypeptide: MMPPVRGTLTEGRPLADLTWLRVGGPADWLFQPADEEDLAGFLAAHDPAVPVFPMGVGSNLIVRDGGLRAVVIRLGRGFNGIRVEGERVIAGAAALDAHVARRAAEAGRDLTFLRTIPGTIGGAVRMNAGCYGSYVADHLIEVRAITREGRAVTLPAADLGLAYRQSRLPEGWVLVEAAFRADAGDPAALARRMDEQIARRDSSQPTRDRSAGSTFRNPAGFSSTGRADDTHELKAWKLIDEAGMRGARRGGAQMSEMHSNFLINTGGATAADLEGLGEEVIKRVFQSSGIELQWEIMRVGEEPVNKQ.

The FAD-binding PCMH-type domain maps to 22 to 185 (RVGGPADWLF…VEAAFRADAG (164 aa)). Arg-165 is a catalytic residue. Residues 197–211 (QIARRDSSQPTRDRS) are compositionally biased toward basic and acidic residues. The interval 197–228 (QIARRDSSQPTRDRSAGSTFRNPAGFSSTGRA) is disordered. Polar residues predominate over residues 212 to 226 (AGSTFRNPAGFSSTG). The active-site Proton donor is Ser-214. Glu-296 is an active-site residue.

It belongs to the MurB family. The cofactor is FAD.

Its subcellular location is the cytoplasm. It carries out the reaction UDP-N-acetyl-alpha-D-muramate + NADP(+) = UDP-N-acetyl-3-O-(1-carboxyvinyl)-alpha-D-glucosamine + NADPH + H(+). It functions in the pathway cell wall biogenesis; peptidoglycan biosynthesis. In terms of biological role, cell wall formation. This Cereibacter sphaeroides (strain ATCC 17025 / ATH 2.4.3) (Rhodobacter sphaeroides) protein is UDP-N-acetylenolpyruvoylglucosamine reductase.